Here is a 434-residue protein sequence, read N- to C-terminus: Glutamate-1-semialdehyde 2,1-aminomutase (434 aa).

An N6-(pyridoxal phosphate)lysine modification is found at Lys266.

The protein belongs to the class-III pyridoxal-phosphate-dependent aminotransferase family. HemL subfamily. As to quaternary structure, homodimer. It depends on pyridoxal 5'-phosphate as a cofactor.

The protein resides in the cytoplasm. It catalyses the reaction (S)-4-amino-5-oxopentanoate = 5-aminolevulinate. It participates in porphyrin-containing compound metabolism; protoporphyrin-IX biosynthesis; 5-aminolevulinate from L-glutamyl-tRNA(Glu): step 2/2. The chain is Glutamate-1-semialdehyde 2,1-aminomutase from Psychrobacter sp. (strain PRwf-1).